Reading from the N-terminus, the 159-residue chain is MKIRILTIGQKMPAWVLTGFEDYFKRIQPFVQTQVIELPMAKRGKNDSDADILKYCQIEGESILAALKPNEVLIALEVGGRELSTEKLADTMKSWMLEGHDIALAIGGPDGLSDQVRKAAAWHWSLSKLTMPHPMVRILLIEQLYRAMSINHNHPYHRA.

S-adenosyl-L-methionine is bound by residues leucine 76, glycine 107, and 126 to 131 (LSKLTM).

Belongs to the RNA methyltransferase RlmH family. Homodimer.

Its subcellular location is the cytoplasm. It carries out the reaction pseudouridine(1915) in 23S rRNA + S-adenosyl-L-methionine = N(3)-methylpseudouridine(1915) in 23S rRNA + S-adenosyl-L-homocysteine + H(+). Its function is as follows. Specifically methylates the pseudouridine at position 1915 (m3Psi1915) in 23S rRNA. The sequence is that of Ribosomal RNA large subunit methyltransferase H from Acinetobacter baylyi (strain ATCC 33305 / BD413 / ADP1).